The sequence spans 596 residues: Ferredoxin--nitrite reductase, chloroplastic (596 aa).

Residues Met1–Arg28 constitute a chloroplast transit peptide. The segment at Met1 to Leu56 is disordered. A compositionally biased stretch (low complexity) spans Pro31–Ala47. Positions 474, 480, 515, and 519 each coordinate [4Fe-4S] cluster. Cys519 contributes to the siroheme binding site.

It belongs to the nitrite and sulfite reductase 4Fe-4S domain family. As to quaternary structure, monomer. It depends on siroheme as a cofactor. Requires [4Fe-4S] cluster as cofactor.

It localises to the plastid. Its subcellular location is the chloroplast. It carries out the reaction 6 oxidized [2Fe-2S]-[ferredoxin] + NH4(+) + 2 H2O = nitrite + 6 reduced [2Fe-2S]-[ferredoxin] + 8 H(+). It functions in the pathway nitrogen metabolism; nitrate reduction (assimilation). Catalyzes the six-electron reduction of nitrite to ammonium. This chain is Ferredoxin--nitrite reductase, chloroplastic, found in Oryza sativa subsp. japonica (Rice).